Reading from the N-terminus, the 228-residue chain is N-acetyltransferase family 8 member 3 (228 aa).

2 helical membrane passes run 36-56 (MLLLPGTLLILLGVPLTLFLA) and 58-78 (GSWLLVLLSTLTLLVSLWLLA). Positions 61–217 (LLVLLSTLTL…RNSPMICLKY (157 aa)) constitute an N-acetyltransferase domain.

It belongs to the camello family.

The protein localises to the nucleus membrane. It localises to the cytoplasm. It is found in the perinuclear region. The catalysed reaction is L-lysyl-[protein] + acetyl-CoA = N(6)-acetyl-L-lysyl-[protein] + CoA + H(+). Has histone acetyltransferase activity in vitro, with specificity for histone H4. The polypeptide is N-acetyltransferase family 8 member 3 (Rattus norvegicus (Rat)).